The following is a 429-amino-acid chain: SET domain-containing protein 14 (429 aa).

The Zn(2+) site is built by cysteine 26, cysteine 29, cysteine 39, cysteine 42, cysteine 48, cysteine 52, histidine 60, and cysteine 64. The MYND-type zinc-finger motif lies at 26 to 64 (CNQCLTSMAELKKCSACRRLAYCSQECQRADWKLHKVEC).

It is found in the nucleus. The polypeptide is SET domain-containing protein 14 (set-14) (Caenorhabditis elegans).